Here is a 155-residue protein sequence, read N- to C-terminus: Cytochrome c-type biogenesis protein CcmE (155 aa).

Residues 1 to 7 (MTRKQKR) are Cytoplasmic-facing. The chain crosses the membrane as a helical; Signal-anchor for type II membrane protein span at residues 8-28 (LVVIAGGMSFILAAVLLVMFA). Over 29–155 (FSQSVAYFYM…GKGQEAKATP (127 aa)) the chain is Periplasmic. Heme contacts are provided by H124 and Y128.

It belongs to the CcmE/CycJ family.

It localises to the cell inner membrane. Heme chaperone required for the biogenesis of c-type cytochromes. Transiently binds heme delivered by CcmC and transfers the heme to apo-cytochromes in a process facilitated by CcmF and CcmH. This chain is Cytochrome c-type biogenesis protein CcmE, found in Rhizobium etli (strain ATCC 51251 / DSM 11541 / JCM 21823 / NBRC 15573 / CFN 42).